A 216-amino-acid chain; its full sequence is Acyl-homoserine-lactone synthase (216 aa).

Belongs to the autoinducer synthase family.

The catalysed reaction is a fatty acyl-[ACP] + S-adenosyl-L-methionine = an N-acyl-L-homoserine lactone + S-methyl-5'-thioadenosine + holo-[ACP] + H(+). Functionally, required for the synthesis of OHHL (N-(3-oxohexanoyl)-L-homoserine lactone), an autoinducer molecule which binds to CarR and thus acts in the control of the biosynthesis of carbapenem antibiotics. In Pectobacterium carotovorum subsp. carotovorum (Erwinia carotovora subsp. carotovora), this protein is Acyl-homoserine-lactone synthase (carI).